A 339-amino-acid chain; its full sequence is Uroporphyrinogen decarboxylase (339 aa).

Substrate contacts are provided by residues 23 to 27 (RQAGR), Asp-72, Tyr-147, Thr-202, and His-315.

It belongs to the uroporphyrinogen decarboxylase family. Homodimer.

The protein resides in the cytoplasm. It catalyses the reaction uroporphyrinogen III + 4 H(+) = coproporphyrinogen III + 4 CO2. It participates in porphyrin-containing compound metabolism; protoporphyrin-IX biosynthesis; coproporphyrinogen-III from 5-aminolevulinate: step 4/4. Its function is as follows. Catalyzes the decarboxylation of four acetate groups of uroporphyrinogen-III to yield coproporphyrinogen-III. This is Uroporphyrinogen decarboxylase from Geotalea uraniireducens (strain Rf4) (Geobacter uraniireducens).